Here is a 907-residue protein sequence, read N- to C-terminus: NADH-quinone oxidoreductase subunit G (907 aa).

The 83-residue stretch at 1-83 (MTIIFVDNEE…GMIVSTSDKI (83 aa)) folds into the 2Fe-2S ferredoxin-type domain. C34, C45, C48, and C67 together coordinate [2Fe-2S] cluster. In terms of domain architecture, 4Fe-4S His(Cys)3-ligated-type spans 83–122 (ISRNFRKGIIELLMLNHPHDCPICEEGGSCHLQDMTVMAG). Positions 99, 103, 106, 112, 151, 154, 157, 201, 228, 231, 235, and 263 each coordinate [4Fe-4S] cluster. The 57-residue stretch at 221-277 (MQYAPSICQHCCVGCNISVGEKYGKISRIENRYHNAINHYFLCDLGRFSYDYSNVDE) folds into the 4Fe-4S Mo/W bis-MGD-type domain.

It belongs to the complex I 75 kDa subunit family. Composed of 13 different subunits. Subunits NuoCD, E, F, and G constitute the peripheral sector of the complex. It depends on [2Fe-2S] cluster as a cofactor. The cofactor is [4Fe-4S] cluster.

The catalysed reaction is a quinone + NADH + 5 H(+)(in) = a quinol + NAD(+) + 4 H(+)(out). NDH-1 shuttles electrons from NADH, via FMN and iron-sulfur (Fe-S) centers, to quinones in the respiratory chain. Couples the redox reaction to proton translocation (for every two electrons transferred, four hydrogen ions are translocated across the cytoplasmic membrane), and thus conserves the redox energy in a proton gradient. The sequence is that of NADH-quinone oxidoreductase subunit G (nuoG) from Buchnera aphidicola subsp. Baizongia pistaciae (strain Bp).